A 90-amino-acid chain; its full sequence is U7-theraphotoxin-Hhn1a 3 (90 aa).

The signal sequence occupies residues 1–26; it reads MKTAIFTVVLALAVFAVLSFGWEANG. Positions 27–50 are excised as a propeptide; that stretch reads KALSEEFTELIHEKEAASETEARE. Intrachain disulfides connect C51/C65, C58/C70, and C64/C81.

The protein belongs to the neurotoxin 10 (Hwtx-1) family. 13 (Hntx-13) subfamily. In terms of tissue distribution, expressed by the venom gland.

The protein resides in the secreted. Ion channel inhibitor. This chain is U7-theraphotoxin-Hhn1a 3, found in Cyriopagopus hainanus (Chinese bird spider).